The chain runs to 320 residues: MSKSESPKEPEQLRKLFIGGLSFETTDESLRSHFEQWGTLTDCVVMRDPNTKRSRGFGFVTYATVEKVDAAMNARPHKVDGRVVEPKRAVSREDSQRPGAHLTVKKIFVGGIKEDTEEHHLRDYFEQYGKIEVIEIMTDRGSGKKRGFAFVTFDDHNSVDKIVIQKYHTVNGHNCEVRKALSKQEMASASSSQRGRSGSGNFGGGRGGGFGGNDNFGRGGNFSGRGGFGGSRGGGGYGGSGDGYNGFGNDGSNFGGGGSYNDFGNYNNQSSNFGPMKGGNFGGRSLGPYGGGGQYFAKPRNQGGYGGSSSSSSYGSGRRF.

The residue at position 1 (Met-1) is an N-acetylmethionine. Ser-2 carries the post-translational modification N-acetylserine; in Heterogeneous nuclear ribonucleoprotein A1, N-terminally processed. Ser-2 is modified (phosphoserine). Position 3 is an N6-acetyllysine; alternate (Lys-3). A Glycyl lysine isopeptide (Lys-Gly) (interchain with G-Cter in SUMO2); alternate cross-link involves residue Lys-3. 2 positions are modified to phosphoserine: Ser-4 and Ser-6. The tract at residues 4 to 94 is globular A domain; it reads SESPKEPEQL…EPKRAVSRED (91 aa). Lys-8 participates in a covalent cross-link: Glycyl lysine isopeptide (Lys-Gly) (interchain with G-Cter in SUMO2). RRM domains lie at 14 to 97 and 105 to 184; these read RKLF…DSQR and KKIF…LSKQ. Ser-22 is subject to Phosphoserine. Lys-78 participates in a covalent cross-link: Glycyl lysine isopeptide (Lys-Gly) (interchain with G-Cter in SUMO2). A globular B domain region spans residues 95–185; that stretch reads SQRPGAHLTV…EVRKALSKQE (91 aa). Lys-113 is covalently cross-linked (Glycyl lysine isopeptide (Lys-Gly) (interchain with G-Cter in SUMO)). Glycyl lysine isopeptide (Lys-Gly) (interchain with G-Cter in SUMO2) cross-links involve residues Lys-179 and Lys-183. Residues 182–216 form a disordered region; the sequence is SKQEMASASSSQRGRSGSGNFGGGRGGGFGGNDNF. Ser-192 bears the Phosphoserine; by MKNK2 mark. An Asymmetric dimethylarginine; alternate modification is found at Arg-194. Arg-194 is subject to Dimethylated arginine; alternate. Arg-194 is modified (omega-N-methylarginine; alternate). Over residues 197-216 the composition is skewed to gly residues; sequence SGSGNFGGGRGGGFGGNDNF. Ser-199 bears the Phosphoserine mark. Arg-206, Arg-218, Arg-225, and Arg-232 each carry asymmetric dimethylarginine; alternate. The residue at position 206 (Arg-206) is a Dimethylated arginine; alternate. Omega-N-methylarginine; alternate occurs at positions 206, 218, 225, and 232. The segment at 218–240 is RNA-binding RGG-box; that stretch reads RGGNFSGRGGFGGSRGGGGYGGS. Arg-225 carries the dimethylated arginine; alternate modification. The segment at 268–305 is nuclear targeting sequence; that stretch reads NQSSNFGPMKGGNFGGRSLGPYGGGGQYFAKPRNQGGY. Residues 277–294 show a composition bias toward gly residues; it reads KGGNFGGRSLGPYGGGGQ. The disordered stretch occupies residues 277-320; sequence KGGNFGGRSLGPYGGGGQYFAKPRNQGGYGGSSSSSSYGSGRRF. Arg-284 bears the Omega-N-methylarginine mark. Ser-285 is modified (phosphoserine). Residue Lys-298 is modified to N6-acetyllysine; alternate. A Glycyl lysine isopeptide (Lys-Gly) (interchain with G-Cter in SUMO2); alternate cross-link involves residue Lys-298. Arg-300 is subject to Omega-N-methylarginine. Residues 308 to 320 are compositionally biased toward low complexity; it reads SSSSSSYGSGRRF. Ser-309 is subject to Phosphoserine. 3 positions are modified to phosphoserine; by MKNK2: Ser-310, Ser-311, and Ser-312. Ser-313 and Ser-316 each carry phosphoserine. Position 318 is an omega-N-methylarginine (Arg-318).

In terms of assembly, identified in the spliceosome C complex. Identified in a IGF2BP1-dependent mRNP granule complex containing untranslated mRNAs. Interacts with SEPT6, C9orf72, KHDRBS1, UBQLN2. Interacts with PPIA/CYPA. Post-translationally, sumoylated.

The protein localises to the nucleus. Its subcellular location is the cytoplasm. Involved in the packaging of pre-mRNA into hnRNP particles, transport of poly(A) mRNA from the nucleus to the cytoplasm and modulation of splice site selection. Plays a role in the splicing of pyruvate kinase PKM by binding repressively to sequences flanking PKM exon 9, inhibiting exon 9 inclusion and resulting in exon 10 inclusion and production of the PKM M2 isoform. Binds to the IRES and thereby inhibits the translation of the apoptosis protease activating factor APAF1. May bind to specific miRNA hairpins. The protein is Heterogeneous nuclear ribonucleoprotein A1 (HNRNPA1) of Macaca mulatta (Rhesus macaque).